The chain runs to 46 residues: Acetylajmalan esterase (46 aa).

Residue N39 is glycosylated (N-linked (GlcNAc...) asparagine).

This sequence belongs to the 'GDSL' lipolytic enzyme family.

It catalyses the reaction 17-O-acetylajmaline + H2O = ajmaline + acetate + H(+). It carries out the reaction 17-O-acetylnorajmaline + H2O = norajmaline + acetate + H(+). In terms of biological role, deacetylates 17-O-acetylajmaline and 17-O-acetylnorajmaline, but is inactive toward other acetylated alkaloids. The polypeptide is Acetylajmalan esterase (Rauvolfia verticillata (Common devil-pepper)).